The sequence spans 779 residues: Endonuclease MutS2 (779 aa).

G328–T335 contacts ATP. The Smr domain occupies L704–G779.

This sequence belongs to the DNA mismatch repair MutS family. MutS2 subfamily. In terms of assembly, homodimer. Binds to stalled ribosomes, contacting rRNA.

Functionally, endonuclease that is involved in the suppression of homologous recombination and thus may have a key role in the control of bacterial genetic diversity. Acts as a ribosome collision sensor, splitting the ribosome into its 2 subunits. Detects stalled/collided 70S ribosomes which it binds and splits by an ATP-hydrolysis driven conformational change. Acts upstream of the ribosome quality control system (RQC), a ribosome-associated complex that mediates the extraction of incompletely synthesized nascent chains from stalled ribosomes and their subsequent degradation. Probably generates substrates for RQC. The chain is Endonuclease MutS2 from Streptococcus pyogenes serotype M1.